Reading from the N-terminus, the 766-residue chain is TRP-like ion channel protein flc1 (766 aa).

Residues 1–24 form the signal peptide; sequence MRIPLFILTFLFTFFSLATTPVSA. At 25–170 the chain is on the lumenal side; sequence DSGVLYTDAV…ANGKTAHQKG (146 aa). N-linked (GlcNAc...) asparagine glycans are attached at residues asparagine 56, asparagine 73, asparagine 89, and asparagine 109. Residues 171–191 form a helical membrane-spanning segment; it reads VIWASAIFTLVAFLVAIWHTA. Residues 192–205 are Cytoplasmic-facing; it reads SGTSTSPIQYRWFD. The helical transmembrane segment at 206–226 threads the bilayer; the sequence is ILFIFQVAAASGLLHLNYPLV. At 227–351 the chain is on the lumenal side; it reads YTNFVQNFHW…RIPEANAYDT (125 aa). Asparagine 325 is a glycosylation site (N-linked (GlcNAc...) asparagine). Residues 352–372 traverse the membrane as a helical segment; the sequence is IWFVFLALIGIFIAFHVLLFG. Residues 373–407 lie on the Cytoplasmic side of the membrane; that stretch reads MVLLFDRMGRNRSHLGWAARLRRMWWPFCVGNSLR. Residues 408–428 traverse the membrane as a helical segment; sequence LCLIGFFPIWIFAFWQFHIGD. At 429–432 the chain is on the lumenal side; the sequence is SGLS. The helical transmembrane segment at 433–453 threads the bilayer; the sequence is IFWAVFGILLTLVPLATAFLL. The Cytoplasmic portion of the chain corresponds to 454–493; the sequence is SLLRARRISSTSPEINSLYTSFRYFHSIGVLYRQYRQKFH. Residues 494–514 form a helical membrane-spanning segment; it reads YFWFTPFVLAMIARAGFIAFG. Topologically, residues 515-517 are lumenal; sequence PAS. The helical transmembrane segment at 518-538 threads the bilayer; that stretch reads AWAQVIGNLVVEFIVLVALLA. The Cytoplasmic segment spans residues 539 to 548; that stretch reads CRPHKDKKGD. Residues 549-569 traverse the membrane as a helical segment; sequence WLGAFLSICRLIAIGLLIAFI. Over 570 to 580 the chain is Lumenal; it reads PDMNVKPIPRA. A helical membrane pass occupies residues 581–601; it reads VIAFVIIVFYGVPVVFLFVGF. Over 602-766 the chain is Cytoplasmic; sequence LWNIGYGYLW…TDEKQWSRRY (165 aa). The disordered stretch occupies residues 704-766; the sequence is ASSADGALSP…TDEKQWSRRY (63 aa). A compositionally biased stretch (basic and acidic residues) spans 757-766; it reads TDEKQWSRRY.

Belongs to the transient receptor potential (TRP) ion channel family.

The protein localises to the endoplasmic reticulum membrane. Its function is as follows. Endoplasmic reticulum membrane flavin carrier protein that plays a crucial role in Ca(2+) signaling/homeostasis via the modulation of the calcineurin-Crz1 stress response pathway which is important for both stress responses and virulence. In Cryptococcus neoformans var. grubii serotype A (strain H99 / ATCC 208821 / CBS 10515 / FGSC 9487) (Filobasidiella neoformans var. grubii), this protein is TRP-like ion channel protein flc1.